The primary structure comprises 190 residues: GTP cyclohydrolase 1 (190 aa).

Zn(2+)-binding residues include Cys80, His83, and Cys151.

This sequence belongs to the GTP cyclohydrolase I family. As to quaternary structure, toroid-shaped homodecamer, composed of two pentamers of five dimers.

It carries out the reaction GTP + H2O = 7,8-dihydroneopterin 3'-triphosphate + formate + H(+). The protein operates within cofactor biosynthesis; 7,8-dihydroneopterin triphosphate biosynthesis; 7,8-dihydroneopterin triphosphate from GTP: step 1/1. The protein is GTP cyclohydrolase 1 (folE) of Rickettsia prowazekii (strain Madrid E).